The following is a 423-amino-acid chain: uncharacterized protein (423 aa).

The BON domain maps to 75–145; that stretch reads LHVVVTQPIA…PIVNNIKVAG (71 aa).

Belongs to the bacterial secretin family.

Functionally, involved in the secretion of an unknown compound. This is an uncharacterized protein from Sinorhizobium fredii (strain NBRC 101917 / NGR234).